A 493-amino-acid chain; its full sequence is Transcript termination protein A18 (493 aa).

A Helicase ATP-binding domain is found at 100-256; it reads MIELKRPLYI…NSIINIAKLS (157 aa). Residue 113–120 coordinates ATP; it reads LACGFGKT. The DESH box signature appears at 206-209; it reads DESH.

It belongs to the helicase family. Poxviruses subfamily. Interacts with G2. Might be part of a transcription complex composed at least of G2, A18, and H5.

The protein localises to the virion. Its function is as follows. DNA helicase which seems to act as a postreplicative transcription termination factor. Involved in ATP-dependent release of nascent RNA. Forms a stable complex with single-stranded DNA, and to a lesser extent RNA. In Cowpox virus (strain GRI-90 / Grishak) (CPV), this protein is Transcript termination protein A18.